A 449-amino-acid polypeptide reads, in one-letter code: UNC93-like protein MFSD11 (449 aa).

The chain crosses the membrane as a helical span at residues 8-28 (LFNIVILGVAFMFMFTAFQTC). N-linked (GlcNAc...) asparagine glycosylation is present at N40. The next 5 membrane-spanning stretches (helical) occupy residues 53-73 (AIIY…VAIV), 74-94 (GPQI…AVFI), 96-116 (PFPW…AVLW), 138-158 (IFWA…YFAW), and 170-190 (RTVF…FFLI). Residue S204 is modified to Phosphoserine. 6 consecutive transmembrane segments (helical) span residues 239 to 259 (MLLL…FSGV), 277 to 297 (LIGL…SLFG), 309 to 329 (PVVL…FLNM), 359 to 379 (FLLG…LGFL), 385 to 405 (APAF…AFFY), and 410 to 430 (LLHW…ISFF).

Belongs to the unc-93 family. As to expression, widely expressed.

It is found in the membrane. The chain is UNC93-like protein MFSD11 (Mfsd11) from Mus musculus (Mouse).